The primary structure comprises 380 residues: Protein-tyrosine sulfotransferase A (380 aa).

Residues 1 to 6 lie on the Cytoplasmic side of the membrane; that stretch reads MRKNRE. Residues 7 to 27 form a helical; Signal-anchor for type II membrane protein membrane-spanning segment; it reads LLLVLFLVVFILFYFITARTA. Residues 28-380 are Lumenal-facing; sequence DDPYYSNHRE…PIVDNEVSKL (353 aa). Asn-66 is a glycosylation site (N-linked (GlcNAc...) asparagine). Residue 79 to 83 coordinates 3'-phosphoadenylyl sulfate; that stretch reads RSGTT. Cys-97 and Cys-157 are joined by a disulfide. Residue Glu-100 is the Proton donor/acceptor of the active site. The interaction with peptide substrate stretch occupies residues 102–106; that stretch reads RVIPR. 3 residues coordinate 3'-phosphoadenylyl sulfate: Arg-184, Ser-192, and Arg-196. A disulfide bridge connects residues Cys-226 and Cys-234. Residues Tyr-239, 284-293, and Lys-299 contribute to the 3'-phosphoadenylyl sulfate site; that span reads SSDQVVKPVN.

Belongs to the protein sulfotransferase family.

It is found in the golgi apparatus membrane. The catalysed reaction is L-tyrosyl-[protein] + 3'-phosphoadenylyl sulfate = O-sulfo-L-tyrosine-[protein] + adenosine 3',5'-bisphosphate + H(+). In terms of biological role, catalyzes the O-sulfation of tyrosine residues within acidic motifs of polypeptides, using 3'-phosphoadenylyl sulfate (PAPS) as cosubstrate. The protein is Protein-tyrosine sulfotransferase A (tpst-1) of Caenorhabditis elegans.